The sequence spans 398 residues: Phosphoglycerate kinase (398 aa).

Substrate contacts are provided by residues 23-25 (DLN), Arg-38, 61-64 (HFGR), Arg-119, and Arg-152. Residues Lys-202, Glu-324, and 354–357 (GGDT) contribute to the ATP site.

Belongs to the phosphoglycerate kinase family. In terms of assembly, monomer.

Its subcellular location is the cytoplasm. The catalysed reaction is (2R)-3-phosphoglycerate + ATP = (2R)-3-phospho-glyceroyl phosphate + ADP. It participates in carbohydrate degradation; glycolysis; pyruvate from D-glyceraldehyde 3-phosphate: step 2/5. The protein is Phosphoglycerate kinase of Rhodopseudomonas palustris (strain ATCC BAA-98 / CGA009).